The following is a 128-amino-acid chain: Gas vesicle protein O (128 aa).

The disordered stretch occupies residues 1–49 (MANTPEDTQNTQNDSQNDSQNDSQKDTSARATSARAHQQPQEQPPSPMR). Over residues 7–22 (DTQNTQNDSQNDSQND) the composition is skewed to low complexity. The segment covering 29–41 (ARATSARAHQQPQ) has biased composition (polar residues).

It belongs to the gas vesicle GvpO family.

It is found in the gas vesicle. A minor component of the gas vesicle. May play a role in transcription and/or RNA stability and in GV assembly. Gas vesicles are hollow, gas filled proteinaceous nanostructures found in some microorganisms. It is not clear what function gas vesicles perform in soil bacteria. The chain is Gas vesicle protein O from Streptomyces sp. (strain CB03234).